The chain runs to 366 residues: tRNA 2-selenouridine synthase (366 aa).

Residues 14–137 (LLENRPLIDV…IRSFLINTIE (124 aa)) enclose the Rhodanese domain. The S-selanylcysteine intermediate role is filled by Cys-97.

It belongs to the SelU family. As to quaternary structure, monomer.

It carries out the reaction 5-methylaminomethyl-2-thiouridine(34) in tRNA + selenophosphate + (2E)-geranyl diphosphate + H2O + H(+) = 5-methylaminomethyl-2-selenouridine(34) in tRNA + (2E)-thiogeraniol + phosphate + diphosphate. The enzyme catalyses 5-methylaminomethyl-2-thiouridine(34) in tRNA + (2E)-geranyl diphosphate = 5-methylaminomethyl-S-(2E)-geranyl-thiouridine(34) in tRNA + diphosphate. It catalyses the reaction 5-methylaminomethyl-S-(2E)-geranyl-thiouridine(34) in tRNA + selenophosphate + H(+) = 5-methylaminomethyl-2-(Se-phospho)selenouridine(34) in tRNA + (2E)-thiogeraniol. The catalysed reaction is 5-methylaminomethyl-2-(Se-phospho)selenouridine(34) in tRNA + H2O = 5-methylaminomethyl-2-selenouridine(34) in tRNA + phosphate. Functionally, involved in the post-transcriptional modification of the uridine at the wobble position (U34) of tRNA(Lys), tRNA(Glu) and tRNA(Gln). Catalyzes the conversion of 2-thiouridine (S2U-RNA) to 2-selenouridine (Se2U-RNA). Acts in a two-step process involving geranylation of 2-thiouridine (S2U) to S-geranyl-2-thiouridine (geS2U) and subsequent selenation of the latter derivative to 2-selenouridine (Se2U) in the tRNA chain. In Shewanella frigidimarina (strain NCIMB 400), this protein is tRNA 2-selenouridine synthase.